Here is a 170-residue protein sequence, read N- to C-terminus: Photosystem I assembly protein Ycf3 (170 aa).

3 TPR repeats span residues 35–68, 72–105, and 120–153; these read AFTY…EVDA, SYIL…NPSL, and GEQA…APTN.

It belongs to the Ycf3 family.

It is found in the plastid. The protein resides in the chloroplast thylakoid membrane. Essential for the assembly of the photosystem I (PSI) complex. May act as a chaperone-like factor to guide the assembly of the PSI subunits. This chain is Photosystem I assembly protein Ycf3, found in Tetradesmus obliquus (Green alga).